Reading from the N-terminus, the 181-residue chain is Adenine phosphoribosyltransferase (181 aa).

It belongs to the purine/pyrimidine phosphoribosyltransferase family. Homodimer.

The protein resides in the cytoplasm. The catalysed reaction is AMP + diphosphate = 5-phospho-alpha-D-ribose 1-diphosphate + adenine. It participates in purine metabolism; AMP biosynthesis via salvage pathway; AMP from adenine: step 1/1. Its function is as follows. Catalyzes a salvage reaction resulting in the formation of AMP, that is energically less costly than de novo synthesis. This chain is Adenine phosphoribosyltransferase, found in Shewanella loihica (strain ATCC BAA-1088 / PV-4).